A 147-amino-acid polypeptide reads, in one-letter code: D-aminoacyl-tRNA deacylase (147 aa).

The Gly-cisPro motif, important for rejection of L-amino acids motif lies at 136–137; that stretch reads GP.

Belongs to the DTD family. Homodimer.

The protein localises to the cytoplasm. It carries out the reaction glycyl-tRNA(Ala) + H2O = tRNA(Ala) + glycine + H(+). The enzyme catalyses a D-aminoacyl-tRNA + H2O = a tRNA + a D-alpha-amino acid + H(+). Functionally, an aminoacyl-tRNA editing enzyme that deacylates mischarged D-aminoacyl-tRNAs. Also deacylates mischarged glycyl-tRNA(Ala), protecting cells against glycine mischarging by AlaRS. Acts via tRNA-based rather than protein-based catalysis; rejects L-amino acids rather than detecting D-amino acids in the active site. By recycling D-aminoacyl-tRNA to D-amino acids and free tRNA molecules, this enzyme counteracts the toxicity associated with the formation of D-aminoacyl-tRNA entities in vivo and helps enforce protein L-homochirality. The chain is D-aminoacyl-tRNA deacylase from Streptococcus thermophilus (strain CNRZ 1066).